We begin with the raw amino-acid sequence, 346 residues long: Olfactory receptor 13D1 (346 aa).

Residues M1 to L57 are Extracellular-facing. N37 is a glycosylation site (N-linked (GlcNAc...) asparagine). A helical transmembrane segment spans residues F58–I78. The Cytoplasmic segment spans residues I79–R86. Residues L87–S107 form a helical membrane-spanning segment. Residues S108–L131 are Extracellular-facing. Residues C129 and C221 are joined by a disulfide bond. The chain crosses the membrane as a helical span at residues Q132–Y152. Residues D153–V171 are Cytoplasmic-facing. The helical transmembrane segment at L172–T192 threads the bilayer. Over V193 to L229 the chain is Extracellular. A helical membrane pass occupies residues I230 to S249. Residues Y250–A269 are Cytoplasmic-facing. The chain crosses the membrane as a helical span at residues F270–M290. The Extracellular portion of the chain corresponds to Y291 to D303. Residue N300 is glycosylated (N-linked (GlcNAc...) asparagine). Residues E304–L324 traverse the membrane as a helical segment. Residues R325–M346 are Cytoplasmic-facing.

It belongs to the G-protein coupled receptor 1 family.

Its subcellular location is the cell membrane. Its function is as follows. Odorant receptor. In Homo sapiens (Human), this protein is Olfactory receptor 13D1 (OR13D1).